The following is a 503-amino-acid chain: MDKLKRDVKEETSRQPCFLYPLLFQEDLYAIAYDRHFNRSSSFEPMEDSSYNNRFSFITVKRSISRIRQQNGSIIPFVNCDQNQLVGHNRSFYYELVLGGFTAVLEVPFSIRSKHYIEGMNEWTSFRSINSIFPLMEDKIPHSNYLLEIRIPYLIHPEILVRTFRRWIQDAPFLHSLRSVLHEHRNLIISSNLDQLTLIASKEKKRLSLFLWNYYAYECESLLVPLWKRFYHSRSLSYESFIERTPFYRKIEHIDIFSHKYKHLKKSIWFLKDPSIHYMRYRESSIIALRGTYLLVKKWRYHLTNLWQCHFHLWLRPYRIYIDELSKTNNCFYFLGYLLSVKMKTSVVQIRMLDDSFITDLITKEFDPIAPTTLLIGSWAKEKFGDISGRPISRLAWTGLTDNDILDRFDRIWRNIFHYYRGSSKKDGLYRIKYILRLSCAKTLACKHKSTIRVVRERFGSELFTKSFPKERESIFLSFSKIRSQRERIWHSDIIQRNFLVNS.

This sequence belongs to the intron maturase 2 family. MatK subfamily.

It is found in the plastid. Its subcellular location is the chloroplast. In terms of biological role, usually encoded in the trnK tRNA gene intron. Probably assists in splicing its own and other chloroplast group II introns. This is Maturase K from Stangeria eriopus (Natal grass cycad).